The sequence spans 87 residues: MKNFETLFAELSEKAATRPEGSRTVAELDSGVHGIGKKVVEEAAEVWMAAEYESDEAAAEEISQLLYHLQVLMLAKGLTLEDVYKHL.

Belongs to the PRA-PH family.

It localises to the cytoplasm. The catalysed reaction is 1-(5-phospho-beta-D-ribosyl)-ATP + H2O = 1-(5-phospho-beta-D-ribosyl)-5'-AMP + diphosphate + H(+). It functions in the pathway amino-acid biosynthesis; L-histidine biosynthesis; L-histidine from 5-phospho-alpha-D-ribose 1-diphosphate: step 2/9. In Pseudarthrobacter chlorophenolicus (strain ATCC 700700 / DSM 12829 / CIP 107037 / JCM 12360 / KCTC 9906 / NCIMB 13794 / A6) (Arthrobacter chlorophenolicus), this protein is Phosphoribosyl-ATP pyrophosphatase.